A 341-amino-acid chain; its full sequence is Fructose-1,6-bisphosphatase, cytosolic (341 aa).

Mg(2+)-binding residues include Glu-71, Glu-100, Asp-121, Leu-123, and Asp-124. Residues 124–127 (DGSF), Asn-215, Tyr-247, Tyr-267, and Lys-277 contribute to the substrate site. Residue Glu-283 coordinates Mg(2+).

The protein belongs to the FBPase class 1 family. Mg(2+) serves as cofactor.

It is found in the cytoplasm. The enzyme catalyses beta-D-fructose 1,6-bisphosphate + H2O = beta-D-fructose 6-phosphate + phosphate. The chain is Fructose-1,6-bisphosphatase, cytosolic from Pisum sativum (Garden pea).